We begin with the raw amino-acid sequence, 406 residues long: Acetate kinase (406 aa).

Position 7 (asparagine 7) interacts with Mg(2+). ATP is bound at residue lysine 14. Arginine 90 is a substrate binding site. The Proton donor/acceptor role is filled by aspartate 147. Residues 207-211 (HLGNG), 283-285 (DMR), and 331-335 (GVGEN) contribute to the ATP site. Glutamate 385 is a Mg(2+) binding site.

Belongs to the acetokinase family. As to quaternary structure, homodimer. Mg(2+) is required as a cofactor. It depends on Mn(2+) as a cofactor.

It is found in the cytoplasm. The enzyme catalyses acetate + ATP = acetyl phosphate + ADP. Its pathway is metabolic intermediate biosynthesis; acetyl-CoA biosynthesis; acetyl-CoA from acetate: step 1/2. Functionally, catalyzes the formation of acetyl phosphate from acetate and ATP. Can also catalyze the reverse reaction. The sequence is that of Acetate kinase from Thermosipho africanus (strain TCF52B).